The sequence spans 114 residues: NADH-ubiquinone oxidoreductase chain 3 (114 aa).

Transmembrane regions (helical) follow at residues 1–21 (MIFYLHITIFLVVCLLMMLFF), 55–75 (FFFVGIVFLIFDVEIVVILPF), and 85–105 (MFVFSFTFINFLIVLGLLYEF).

Belongs to the complex I subunit 3 family.

The protein resides in the mitochondrion membrane. It carries out the reaction a ubiquinone + NADH + 5 H(+)(in) = a ubiquinol + NAD(+) + 4 H(+)(out). Functionally, core subunit of the mitochondrial membrane respiratory chain NADH dehydrogenase (Complex I) that is believed to belong to the minimal assembly required for catalysis. Complex I functions in the transfer of electrons from NADH to the respiratory chain. The immediate electron acceptor for the enzyme is believed to be ubiquinone. This is NADH-ubiquinone oxidoreductase chain 3 (ND3) from Rhipicephalus sanguineus (Brown dog tick).